Here is a 161-residue protein sequence, read N- to C-terminus: Transcription antitermination protein NusB (161 aa).

The disordered stretch occupies residues 1–22 (MNLSDFKPGEGTEVPEEEKSVS).

This sequence belongs to the NusB family.

Involved in transcription antitermination. Required for transcription of ribosomal RNA (rRNA) genes. Binds specifically to the boxA antiterminator sequence of the ribosomal RNA (rrn) operons. In Hydrogenovibrio crunogenus (strain DSM 25203 / XCL-2) (Thiomicrospira crunogena), this protein is Transcription antitermination protein NusB.